The sequence spans 113 residues: Hydrogenase maturation factor HypA (113 aa).

Position 2 (His-2) interacts with Ni(2+). Zn(2+) is bound by residues Cys-73, Cys-76, Cys-89, and Cys-92.

This sequence belongs to the HypA/HybF family.

Functionally, involved in the maturation of [NiFe] hydrogenases. Required for nickel insertion into the metal center of the hydrogenase. The protein is Hydrogenase maturation factor HypA of Prosthecochloris aestuarii (strain DSM 271 / SK 413).